The following is a 171-amino-acid chain: Large ribosomal subunit protein bL9 (171 aa).

The protein belongs to the bacterial ribosomal protein bL9 family.

Functionally, binds to the 23S rRNA. The chain is Large ribosomal subunit protein bL9 from Rickettsia prowazekii (strain Madrid E).